The following is a 169-amino-acid chain: 16S rRNA aminocarboxypropyltransferase (169 aa).

4 residues coordinate S-adenosyl-L-methionine: T17, L67, L90, and T109.

The protein belongs to the TDD superfamily. TSR3 family.

It localises to the cytoplasm. It carries out the reaction an N(1)-methylpseudouridine in rRNA + S-adenosyl-L-methionine = N(1)-methyl-N(3)-[(3S)-3-amino-3-carboxypropyl]pseudouridine in rRNA + S-methyl-5'-thioadenosine + H(+). In terms of biological role, aminocarboxypropyltransferase that catalyzes the aminocarboxypropyl transfer on pseudouridine corresponding to position 914 in M.jannaschii 16S rRNA. It constitutes the last step in biosynthesis of the hypermodified N1-methyl-N3-(3-amino-3-carboxypropyl) pseudouridine (m1acp3-Psi). The chain is 16S rRNA aminocarboxypropyltransferase from Methanothermobacter thermautotrophicus (strain ATCC 29096 / DSM 1053 / JCM 10044 / NBRC 100330 / Delta H) (Methanobacterium thermoautotrophicum).